The primary structure comprises 422 residues: Glycine amidinotransferase, mitochondrial (422 aa).

The transit peptide at 1 to 37 (MLRVRCLRGGSRGAEAAHFIGSRLGRAFTGWVQRSLQ) directs the protein to the mitochondrion. Catalysis depends on residues Asp-253 and His-302. Residue Cys-406 is the Amidino-cysteine intermediate of the active site. Thr-416 is modified (phosphothreonine).

This sequence belongs to the amidinotransferase family. As to quaternary structure, homodimer.

The protein resides in the mitochondrion inner membrane. It carries out the reaction L-arginine + glycine = guanidinoacetate + L-ornithine. The protein operates within amine and polyamine biosynthesis; creatine biosynthesis; creatine from L-arginine and glycine: step 1/2. In terms of biological role, catalyzes the biosynthesis of guanidinoacetate, the immediate precursor of creatine. Creatine plays a vital role in energy metabolism in muscle tissues. May play a role in embryonic and central nervous system development. This is Glycine amidinotransferase, mitochondrial from Gallus gallus (Chicken).